Reading from the N-terminus, the 174-residue chain is Solute carrier family 2, facilitated glucose transporter member 4 (174 aa).

The Cytoplasmic segment spans residues 1–19 (QQIGSEDGEPPQQRVTGTL). Residues 2–8 (QIGSEDG) form an interaction with SRFBP1 region. A Phosphoserine modification is found at Ser5. The chain crosses the membrane as a helical span at residues 20 to 40 (VLAVFSAVLGSLQFGYNIGVI). Topologically, residues 41-76 (NAPQKVIEQSYNETWLGRQGPNGPGSIPPGTLTTLW) are extracellular. The N-linked (GlcNAc...) asparagine glycan is linked to Asn52. The helical transmembrane segment at 77 to 97 (ALSVAIFSVGGMFSSFLLGII) threads the bilayer. Over 98 to 114 (SQWLGRKKAMLFNNTLA) the chain is Cytoplasmic. The chain crosses the membrane as a helical span at residues 115–135 (VLAGALMGLAKAAASYEMLIL). Residues 136-137 (GR) are Extracellular-facing. Residues 138–158 (FLIGAYSGLASGLVPMYVGEI) traverse the membrane as a helical segment. Topologically, residues 159 to 166 (APTHLRGA) are cytoplasmic. A helical transmembrane segment spans residues 167–174 (LGTLNQLA).

The protein belongs to the major facilitator superfamily. Sugar transporter (TC 2.A.1.1) family. Glucose transporter subfamily. Binds to DAXX. Interacts via its N-terminus with SRFBP1. Interacts with NDUFA9. Interacts with TRARG1; the interaction is required for proper SLC2A4 recycling after insulin stimulation. In terms of processing, sumoylated. Palmitoylated. Palmitoylation by ZDHHC7 controls the insulin-dependent translocation of GLUT4 to the plasma membrane.

The protein localises to the cell membrane. The protein resides in the endomembrane system. It localises to the cytoplasm. Its subcellular location is the perinuclear region. It catalyses the reaction D-glucose(out) = D-glucose(in). Functionally, insulin-regulated facilitative glucose transporter, which plays a key role in removal of glucose from circulation. Response to insulin is regulated by its intracellular localization: in the absence of insulin, it is efficiently retained intracellularly within storage compartments in muscle and fat cells. Upon insulin stimulation, translocates from these compartments to the cell surface where it transports glucose from the extracellular milieu into the cell. In Sus scrofa (Pig), this protein is Solute carrier family 2, facilitated glucose transporter member 4.